The chain runs to 434 residues: Histidinol dehydrogenase (434 aa).

NAD(+)-binding residues include Tyr-130, Gln-188, and Asn-211. Residues Ser-237, Gln-259, and His-262 each coordinate substrate. The Zn(2+) site is built by Gln-259 and His-262. Active-site proton acceptor residues include Glu-326 and His-327. The substrate site is built by His-327, Asp-360, Glu-414, and His-419. Position 360 (Asp-360) interacts with Zn(2+). Position 419 (His-419) interacts with Zn(2+).

This sequence belongs to the histidinol dehydrogenase family. As to quaternary structure, homodimer. Zn(2+) is required as a cofactor.

It catalyses the reaction L-histidinol + 2 NAD(+) + H2O = L-histidine + 2 NADH + 3 H(+). It participates in amino-acid biosynthesis; L-histidine biosynthesis; L-histidine from 5-phospho-alpha-D-ribose 1-diphosphate: step 9/9. In terms of biological role, catalyzes the sequential NAD-dependent oxidations of L-histidinol to L-histidinaldehyde and then to L-histidine. In Shigella sonnei (strain Ss046), this protein is Histidinol dehydrogenase.